Consider the following 1621-residue polypeptide: Nestin (1621 aa).

Met1 carries the N-acetylmethionine modification. Positions 1-7 (MEGCMGE) are head. Positions 8 to 43 (ESFQMWELNRRLEAYLARVKALEEQNELLSAELGGL) are coil 1A. Positions 8–313 (ESFQMWELNR…TLLEAENSRL (306 aa)) constitute an IF rod domain. A linker 1 region spans residues 44–55 (RAQSADTSWRAH). Residues 56 to 151 (ADDELAALRA…VAHEEERVGL (96 aa)) form a coil 1B region. The interval 152 to 173 (NAQAACAPRCPAPPRGPPAPAP) is linker 12. Residues 174–192 (EVEELARRLGEAWRGAVRG) are coil 2A. The segment at 193–195 (YQE) is linker 2. Residues 196–313 (RVAHMETSLG…TLLEAENSRL (118 aa)) form a coil 2B region. Ser311 bears the Phosphoserine mark. Residues 314–1621 (QTPGGGSKTS…DRESWSSGED (1308 aa)) form a tail region. Thr315 is modified (phosphothreonine). Ser325 bears the Phosphoserine mark. Thr338 carries the post-translational modification Phosphothreonine. Residues Ser355 and Ser358 each carry the phosphoserine modification. Thr388 is subject to Phosphothreonine. Residues Ser398, Ser471, Ser476, Ser548, Ser564, Ser578, Ser588, Ser638, Ser680, Ser702, Ser746, and Ser768 each carry the phosphoserine modification. The segment at 439–490 (SVLPGPEEPGGQRQEASTGQSPEDHASLAPPLSPDHSSLEAKDGESGGSRVF) is disordered. The segment at 670 to 788 (LEKENQEPLR…PPEKVDLEPL (119 aa)) is disordered. Basic and acidic residues-rich tracts occupy residues 687–725 (EALRPLTKENQEPLRSLEDENKEAFRSLEKENQEPLKTL), 736–770 (LETENHKSLRSLEEQDQETLRTLEKETQQRRRSLG), and 779–788 (PPEKVDLEPL). Position 790 is a phosphoserine (Ser790). Residue Lys811 forms a Glycyl lysine isopeptide (Lys-Gly) (interchain with G-Cter in SUMO1); alternate linkage. Lys811 participates in a covalent cross-link: Glycyl lysine isopeptide (Lys-Gly) (interchain with G-Cter in SUMO2); alternate. Phosphoserine occurs at positions 820, 831, and 842. Thr851 carries the post-translational modification Phosphothreonine. Phosphoserine is present on residues Ser894, Ser905, Ser913, and Ser934. The segment at 895-1593 (LGAWNLENLR…GSALKTSWAG (699 aa)) is disordered. Composition is skewed to basic and acidic residues over residues 904–936 (RSPEEVDKESQRNLEEEENLGKGEYQESLRSLE), 949–960 (QRWEDTVEKDQE), 980–994 (LNLREQDGFTGKEEV), and 1012–1024 (GHPESPEPKEQRG). A Phosphoserine modification is found at Ser1016. Over residues 1085–1098 (GSEPAMGESAAGAE) the composition is skewed to low complexity. Residues 1099 to 1110 (PGPGQGVGGLGD) show a composition bias toward gly residues. Basic and acidic residues-rich tracts occupy residues 1129–1145 (LEAKRVQGLEGPRKDLE) and 1159–1184 (GKSRDPWEPPREGREESEAEAPRGAE). Ser1261, Ser1282, Ser1286, Ser1310, Ser1347, Ser1409, Ser1418, and Ser1452 each carry phosphoserine. A compositionally biased stretch (acidic residues) spans 1275–1292 (PQEEGEESREESEEDELG). The segment covering 1409–1428 (SDGFADEEESGEEGEEDQEE) has biased composition (acidic residues). Composition is skewed to low complexity over residues 1440-1453 (GSSVGSLQALSSSQ) and 1460-1470 (SDSVSVSVPWD). Polar residues predominate over residues 1486 to 1495 (ETESQDSAEP). Phosphoserine occurs at positions 1496, 1498, 1577, 1617, and 1618.

This sequence belongs to the intermediate filament family. In terms of assembly, forms homodimers and homotetramers in vitro. In mixtures with other intermediate filament proteins such as vimentin and alpha-internexin, tis protein preferentially forms heterodimers which can assemble to form intermediate filaments if nestin does not exceed 25%. Interacts with FHOD3. Post-translationally, constitutively phosphorylated. This increases during mitosis when the cytoplasmic intermediate filament network is reorganized. CNS stem cells.

Required for brain and eye development. Promotes the disassembly of phosphorylated vimentin intermediate filaments (IF) during mitosis and may play a role in the trafficking and distribution of IF proteins and other cellular factors to daughter cells during progenitor cell division. Required for survival, renewal and mitogen-stimulated proliferation of neural progenitor cells. This Homo sapiens (Human) protein is Nestin (NES).